A 506-amino-acid polypeptide reads, in one-letter code: Glucan endo-1,3-beta-glucosidase 13 (506 aa).

Positions 1–22 (MARDFKLIFSISILLLLLDCCY) are cleaved as a signal peptide. Residue N70 is glycosylated (N-linked (GlcNAc...) asparagine). E119 serves as the catalytic Proton donor. 3 N-linked (GlcNAc...) asparagine glycosylation sites follow: N127, N175, and N212. The active-site Nucleophile is the E264. N356 and N361 each carry an N-linked (GlcNAc...) asparagine glycan. The cysteines at positions 370 and 433 are disulfide-linked. N459 and N465 each carry an N-linked (GlcNAc...) asparagine glycan. A lipid anchor (GPI-anchor amidated serine) is attached at S471. Positions 472 to 506 (SASTPRGNELLQWILKLCLMISLFFSLQTMNSQAL) are cleaved as a propeptide — removed in mature form.

This sequence belongs to the glycosyl hydrolase 17 family. In terms of processing, contains two additional disulfide bonds.

It localises to the secreted. Its subcellular location is the cell wall. It is found in the cell membrane. It catalyses the reaction Hydrolysis of (1-&gt;3)-beta-D-glucosidic linkages in (1-&gt;3)-beta-D-glucans.. This chain is Glucan endo-1,3-beta-glucosidase 13, found in Arabidopsis thaliana (Mouse-ear cress).